The following is a 1071-amino-acid chain: MTSPAKFKKDKEIIAEYDTQVKEIRAQLTEQMKCLDQQCELRVQLLQDLQDFFRKKAEIEMDYSRNLEKLAERFLAKTRSTKDQQFKKDQNVLSPVNCWNLLLNQVKRESRDHTTLSDIYLNNIIPRFVQVSEDSGRLFKKSKEVGQQLQDDLMKVLNELYSVMKTYHMYNADSISAQSKLKEAEKQEEKQIGKSVKQEDRQTPRSPDSTANVRIEEKHVRRSSVKKIEKMKEKRQAKYTENKLKAIKARNEYLLALEATNASVFKYYIHDLSDIIDQCCDLGYHASLNRALRTFLSAELNLEQSKHEGLDAIENAVENLDATSDKQRLMEMYNNVFCPPMKFEFQPHMGDMASQLCAQQPVQSELVQRRQQLQSRLSTLKIENEEVKKTMEATLQTIQDIVTVEDFDVSDCFQYSNSMESVKSTVSETFMSKPSIAKRRANQQETEQFYFTKMKEYLEGRNLITKLQAKHDLLQKTLGESQRTDCSLARRSSTVRKQDSSQAIPLVVESCIRFISRHGLRHEGVFRVSGSQVEVNDIKNAFERGEDPLAGDQNDHDMDSIAGVLKLYFRGLEHPLFPKDIFHDLIACVTMDNLQERAVHIRKVLLVLPKPTLIIMRYLFAFLNHLSQFSEENMMDPYNLAICFGPSLMSVPEGHDQVSCQAHVNELIKTIIIQHENIFPNPRELEGPIYSRGGSMEDYCDSTHGETISAEDSTQDVTAEHHTSDDECEPIEAIAKFDYVGRTARELSFKKGASLLLYQRASDDWWEGRHNGIDGLIPHQYIVVQDTEDGVVERSSPKSEIEVMSEPPEEKVTARTGASCPSGGHVADIYLANINKQRKRPESGSIRKAFRSDSHGLGSSLTDSSSPGVGASCRPSSQPIMSQNLPKEGPDKCSISGHGSLNSISRHSSLKNRMDSPQIRKTATAGRSKSFNNHRPMDPEVIAQDIEATMNSALNELQELERQSSAKHTPDVVLDTLEPLKTSPVVAPTSEPSSPLHTQLLKDPEPAFQRSASTAGDIACAFRPVKSVKMAAPVKPPATRPKPTVFPKTNATSPGVNSSASPQSTDKSCTV.

One can recognise an F-BAR domain in the interval 22-325 (KEIRAQLTEQ…AVENLDATSD (304 aa)). Residues 181–203 (LKEAEKQEEKQIGKSVKQEDRQT) show a composition bias toward basic and acidic residues. The segment at 181–211 (LKEAEKQEEKQIGKSVKQEDRQTPRSPDSTA) is disordered. Phosphoserine is present on S206. Residues 363 to 401 (QSELVQRRQQLQSRLSTLKIENEEVKKTMEATLQTIQDI) adopt a coiled-coil conformation. Phosphoserine occurs at positions 427, 500, 691, 695, and 724. Residues 489–679 (ARRSSTVRKQ…TIIIQHENIF (191 aa)) form the Rho-GAP domain. The disordered stretch occupies residues 703–726 (THGETISAEDSTQDVTAEHHTSDD). The 60-residue stretch at 728–787 (CEPIEAIAKFDYVGRTARELSFKKGASLLLYQRASDDWWEGRHNGIDGLIPHQYIVVQDT) folds into the SH3 domain. Disordered regions lie at residues 794–820 (RSSPKSEIEVMSEPPEEKVTARTGASC) and 835–936 (NKQR…NHRP). At S795 the chain carries Phosphoserine. Composition is skewed to polar residues over residues 857-867 (LGSSLTDSSSP), 874-885 (RPSSQPIMSQNL), and 897-907 (GHGSLNSISRH). S916 carries the phosphoserine modification. Positions 919-933 (IRKTATAGRSKSFNN) are enriched in polar residues. R927 is subject to Symmetric dimethylarginine; by PRMT5. S930 is modified (phosphoserine). A coiled-coil region spans residues 940 to 968 (EVIAQDIEATMNSALNELQELERQSSAKH). The segment at 983–1012 (SPVVAPTSEPSSPLHTQLLKDPEPAFQRSA) is disordered. Phosphoserine is present on residues S990, S994, S1013, and S1027. The tract at residues 1029 to 1071 (KMAAPVKPPATRPKPTVFPKTNATSPGVNSSASPQSTDKSCTV) is disordered. The span at 1047 to 1071 (PKTNATSPGVNSSASPQSTDKSCTV) shows a compositional bias: polar residues.

As to quaternary structure, homodimer. Forms a heterooligomer with SRGAP1 and SRGAP3 through its F-BAR domain. Interacts (via SH3 domain) with GPHN. Interacts (via SH3 domain) with FMNL1 (activated by RAC1); regulates the actin filament severing activity of FMNL1 and actin dynamics. Interacts (via SH3 domain) with FMNL3. Interacts with RAC1; specifically stimulates RAC1 GTPase activity. Interacts (via F-BAR domain) with HOMER1. Interacts with ROBO1 and ROBO2. Interacts with FASLG. Interacts with PRMT5. In terms of processing, methylation at Arg-927 is required for the stimulation of cell migration, dimerization and localization at the plasma membrane protrusions.

Its subcellular location is the cell membrane. It localises to the cell projection. It is found in the dendritic spine. The protein resides in the postsynaptic density. The protein localises to the postsynaptic cell membrane. Its subcellular location is the lamellipodium. It localises to the cytoplasmic vesicle. It is found in the phagosome. The protein resides in the nucleus. The protein localises to the cytoplasm. Its subcellular location is the cytosol. Postsynaptic RAC1 GTPase activating protein (GAP) that plays a key role in neuronal morphogenesis and migration mainly during development of the cerebral cortex. Regulates excitatory and inhibitory synapse maturation and density in cortical pyramidal neurons. SRGAP2/SRGAP2A limits excitatory and inhibitory synapse density through its RAC1-specific GTPase activating activity, while it promotes maturation of both excitatory and inhibitory synapses through its ability to bind to the postsynaptic scaffolding protein HOMER1 at excitatory synapses, and the postsynaptic protein GPHN at inhibitory synapses. Mechanistically, acts by binding and deforming membranes, thereby regulating actin dynamics to regulate cell migration and differentiation. Promotes cell repulsion and contact inhibition of locomotion: localizes to protrusions with curved edges and controls the duration of RAC1 activity in contact protrusions. In non-neuronal cells, may also play a role in cell migration by regulating the formation of lamellipodia and filopodia. The protein is SLIT-ROBO Rho GTPase-activating protein 2 of Rattus norvegicus (Rat).